A 344-amino-acid chain; its full sequence is Arginine N-succinyltransferase (344 aa).

Leu125 serves as a coordination point for succinyl-CoA. His229 serves as the catalytic Proton donor.

This sequence belongs to the arginine N-succinyltransferase family.

It catalyses the reaction succinyl-CoA + L-arginine = N(2)-succinyl-L-arginine + CoA + H(+). The protein operates within amino-acid degradation; L-arginine degradation via AST pathway; L-glutamate and succinate from L-arginine: step 1/5. Its function is as follows. Catalyzes the transfer of succinyl-CoA to arginine to produce N(2)-succinylarginine. This Escherichia coli O127:H6 (strain E2348/69 / EPEC) protein is Arginine N-succinyltransferase.